Here is a 119-residue protein sequence, read N- to C-terminus: Beta-2-microglobulin (119 aa).

Residues 1–20 form the signal peptide; that stretch reads MARFVVVALLVQLSLFGLEA. An Ig-like C1-type domain is found at 25-114; sequence PKIQVYSRYP…VTFSTPKTVK (90 aa). Cys45 and Cys100 form a disulfide bridge.

Belongs to the beta-2-microglobulin family. As to quaternary structure, heterodimer of an alpha chain and a beta chain. Beta-2-microglobulin is the beta-chain of major histocompatibility complex class I molecules.

The protein resides in the secreted. Its function is as follows. Component of the class I major histocompatibility complex (MHC). Involved in the presentation of peptide antigens to the immune system. The protein is Beta-2-microglobulin (B2M) of Saguinus imperator (Emperor tamarin).